A 222-amino-acid chain; its full sequence is UPF0173 metal-dependent hydrolase Kcr_0055 (222 aa).

This sequence belongs to the UPF0173 family.

This Korarchaeum cryptofilum (strain OPF8) protein is UPF0173 metal-dependent hydrolase Kcr_0055.